A 443-amino-acid chain; its full sequence is Amino-acid acetyltransferase (443 aa).

The 148-residue stretch at 296–443 folds into the N-acetyltransferase domain; the sequence is EQIRRATIND…KSKVLMADLG (148 aa).

It belongs to the acetyltransferase family. ArgA subfamily. As to quaternary structure, homohexamer.

The protein localises to the cytoplasm. The catalysed reaction is L-glutamate + acetyl-CoA = N-acetyl-L-glutamate + CoA + H(+). It participates in amino-acid biosynthesis; L-arginine biosynthesis; N(2)-acetyl-L-ornithine from L-glutamate: step 1/4. In Escherichia coli O157:H7, this protein is Amino-acid acetyltransferase (argA).